A 1144-amino-acid chain; its full sequence is Alpha-mannosidase 2 (1144 aa).

Topologically, residues 1-5 are cytoplasmic; the sequence is MKLSR. A helical; Signal-anchor for type II membrane protein membrane pass occupies residues 6–26; sequence QFTVFGSAIFCVVIFSLYLML. Over 27 to 1144 the chain is Lumenal; sequence DRGHLDYPRN…EISTFRIQLR (1118 aa). N-linked (GlcNAc...) asparagine glycosylation is present at N78. A phosphoserine mark is found at S80 and S82. N93 carries an N-linked (GlcNAc...) asparagine glycan. The Zn(2+) site is built by H175, D177, D289, and H569. D289 functions as the Nucleophile in the catalytic mechanism. A glycan (N-linked (GlcNAc...) asparagine) is linked at N1125.

This sequence belongs to the glycosyl hydrolase 38 family. Homodimer; disulfide-linked. Zn(2+) is required as a cofactor. In terms of processing, glycosylated.

It is found in the golgi apparatus membrane. It catalyses the reaction N(4)-{beta-D-GlcNAc-(1-&gt;2)-alpha-D-Man-(1-&gt;3)-[alpha-D-Man-(1-&gt;3)-[alpha-D-Man-(1-&gt;6)]-alpha-D-Man-(1-&gt;6)]-beta-D-Man-(1-&gt;4)-beta-D-GlcNAc-(1-&gt;4)-beta-D-GlcNAc}-L-asparaginyl-[protein] + 2 H2O = 2 alpha-D-mannopyranose + an N(4)-{beta-D-GlcNAc-(1-&gt;2)-alpha-D-Man-(1-&gt;3)-[alpha-D-Man-(1-&gt;6)]-beta-D-Man-(1-&gt;4)-beta-D-GlcNAc-(1-&gt;4)-beta-D-GlcNAc}-L-asparaginyl-[protein]. It functions in the pathway protein modification; protein glycosylation. Its function is as follows. Catalyzes the first committed step in the biosynthesis of complex N-glycans. It controls conversion of high mannose to complex N-glycans; the final hydrolytic step in the N-glycan maturation pathway. The protein is Alpha-mannosidase 2 (MAN2A1) of Homo sapiens (Human).